Consider the following 697-residue polypeptide: Phosphate acetyltransferase (697 aa).

Positions 374-697 (LFLYNLVQAA…TVVITALQVK (324 aa)) are phosphate acetyltransferase.

It in the N-terminal section; belongs to the CobB/CobQ family. In the C-terminal section; belongs to the phosphate acetyltransferase and butyryltransferase family.

It localises to the cytoplasm. The enzyme catalyses acetyl-CoA + phosphate = acetyl phosphate + CoA. It functions in the pathway metabolic intermediate biosynthesis; acetyl-CoA biosynthesis; acetyl-CoA from acetate: step 2/2. Its function is as follows. Involved in acetate metabolism. This chain is Phosphate acetyltransferase (pta), found in Synechocystis sp. (strain ATCC 27184 / PCC 6803 / Kazusa).